The sequence spans 408 residues: Succinylornithine transaminase (408 aa).

Lysine 252 bears the N6-(pyridoxal phosphate)lysine mark.

Belongs to the class-III pyridoxal-phosphate-dependent aminotransferase family. AstC subfamily. The cofactor is pyridoxal 5'-phosphate.

The enzyme catalyses N(2)-succinyl-L-ornithine + 2-oxoglutarate = N-succinyl-L-glutamate 5-semialdehyde + L-glutamate. It participates in amino-acid degradation; L-arginine degradation via AST pathway; L-glutamate and succinate from L-arginine: step 3/5. Its function is as follows. Catalyzes the transamination of N(2)-succinylornithine and alpha-ketoglutarate into N(2)-succinylglutamate semialdehyde and glutamate. Can also act as an acetylornithine aminotransferase. This Salmonella paratyphi A (strain ATCC 9150 / SARB42) protein is Succinylornithine transaminase.